A 1348-amino-acid chain; its full sequence is Putative late blight resistance protein homolog R1B-12 (1348 aa).

2 coiled-coil regions span residues 446–469 and 561–583; these read RYSDSLAFLKNQLQVIQTEFESLQ and PRMNEEIVGFEDVIENLRKKLLN. An NB-ARC domain is found at 552–848; that stretch reads RTSSQLTRTP…ISESFIKSCE (297 aa). Residue 595 to 602 coordinates ATP; it reads GMPGLGKT. 8 LRR repeats span residues 977-1001, 1051-1074, 1123-1147, 1151-1170, 1171-1194, 1197-1219, 1220-1244, and 1309-1332; these read FKFLKVLDLEHQFFIDFIPTELLYL, LRHLHIPYFSTEKEEALLENSAKL, PITLEILKLYRSSDFKVIPFCISAQ, YLKLSGFYLNSQYLSETADH, LKHLEVLKLHNIEFGGHSEWEVSN, FPQLKILKLEYVSLMKLIVADDA, FPNLEQLVLHDCEDLMEIPSCFMDI, and LPGIQSIAVDSNEKKFIVIGDMDA. In terms of domain architecture, HMA spans 1284–1348; it reads VKKMVLKFDT…VGKLINRGML (65 aa).

Belongs to the disease resistance NB-LRR family.

It is found in the cytoplasm. It localises to the membrane. Functionally, confers resistance to late blight (Phytophthora infestans) races carrying the avirulence gene Avr1. Resistance proteins guard the plant against pathogens that contain an appropriate avirulence protein via an indirect interaction with this avirulence protein. That triggers a defense system including the hypersensitive response, which restricts the pathogen growth. The protein is Putative late blight resistance protein homolog R1B-12 (R1B-12) of Solanum demissum (Wild potato).